We begin with the raw amino-acid sequence, 544 residues long: MSSVQSSQTQKNDDAEVFDALIVGAGFNGIYQLHRLRQEGFKVRLFEAGADMGGIWYWNCYPGARVDSHIPIYEFSIEELWRDWNWTERFPAWDELRRYFHYVDKKLDLSRDIRFGMRVSAAEFDEARDQWVIRTTDGTVVRARFFILCTGFASKPYIPNYKGLESFAGESFHTGLWPQEGASFTGKRVGVVGTGASGVQVVQEASKDAAHLTVFQRTPILALPMQQRKLDVETQQRMKADYPEIFRIRRETFGGFDILRDERSALEVPPEERCALYEKLWQKGGFHYWIGGFSDILTNEEANRTMYDFWRDKTRARIKNPALADKLAPMEPPHPFGVKRPSLEQWYYEAFNQDNVSLVDVREMPIVEIVPEGVLTSDGLVELDMLVLATGFDAVTGGLTQIDIHGTGGITLKEKWTEGARTYLGFATSGFPNMLFLYGPQSPSGFCNGPTCAEMQGEWVVDCLKHMRENNKGRIEATAQAEEEWAQLLNSIAGMTLFPRADSWYMGANIPGKPRQLLNFPGVPIYMDQCNTAAAKDYEGFVLD.

FAD contacts are provided by Phe27, Glu47, Trp56, Asp67, Tyr73, and Val119.

Belongs to the FAD-binding monooxygenase family. The cofactor is FAD.

Catalyzes a Baeyer-Villiger oxidation reaction, i.e. the insertion of an oxygen atom into a carbon-carbon bond adjacent to a carbonyl, which converts ketones to esters or lactones using NADPH as an electron donor. Besides cycloalkanones, can use cyclic alpha,beta-unsaturated ketones as substrates, leading to enol-lactones. Can also act on methylated cycloalkanones and methylated cycloalkenones with high enantioselectivity in some cases. This chain is Baeyer-Villiger monooxygenase, found in Parvibaculum lavamentivorans (strain DS-1 / DSM 13023 / NCIMB 13966).